We begin with the raw amino-acid sequence, 147 residues long: Hemoglobin subunit beta (147 aa).

An N-acetylvaline modification is found at V2. A Globin domain is found at 3–147; it reads HLSGEEKSAV…VANALAHKYH (145 aa). T13 bears the Phosphothreonine mark. A Phosphoserine modification is found at S45. K60 is subject to N6-acetyllysine. H64 serves as a coordination point for heme b. K83 is subject to N6-acetyllysine. Residue H93 coordinates heme b. C94 carries the S-nitrosocysteine modification. An N6-acetyllysine modification is found at K145.

It belongs to the globin family. In terms of assembly, heterotetramer of two alpha chains and two beta chains. As to expression, red blood cells.

Functionally, involved in oxygen transport from the lung to the various peripheral tissues. The chain is Hemoglobin subunit beta (HBB) from Lepus europaeus (European hare).